The following is a 355-amino-acid chain: Guanine nucleotide-binding protein subunit alpha-14 (355 aa).

Positions 34-355 (RELKLLLLGT…QLNLREFNLV (322 aa)) constitute a G-alpha domain. The tract at residues 37–50 (KLLLLGTGESGKST) is G1 motif. GTP is bound by residues 42-49 (GTGESGKS), 176-182 (LRVRVPT), 201-205 (DVGGQ), 270-273 (NKKD), and A327. S49 and T182 together coordinate Mg(2+). Residues 174–182 (DVLRVRVPT) are G2 motif. The G3 motif stretch occupies residues 197–206 (FRMVDVGGQR). Positions 266–273 (ILFLNKKD) are G4 motif. Residues 325–330 (TCATDT) are G5 motif.

The protein belongs to the G-alpha family. G(q) subfamily. As to quaternary structure, g proteins are composed of 3 units; alpha, beta and gamma. The alpha chain contains the guanine nucleotide binding site.

Guanine nucleotide-binding proteins (G proteins) are involved as modulators or transducers in various transmembrane signaling systems. In Bos taurus (Bovine), this protein is Guanine nucleotide-binding protein subunit alpha-14 (GNA14).